The sequence spans 317 residues: Ferrochelatase (317 aa).

Residues histidine 187 and glutamate 268 each coordinate Fe cation.

It belongs to the ferrochelatase family.

The protein localises to the cytoplasm. The enzyme catalyses heme b + 2 H(+) = protoporphyrin IX + Fe(2+). The protein operates within porphyrin-containing compound metabolism; protoheme biosynthesis; protoheme from protoporphyrin-IX: step 1/1. In terms of biological role, catalyzes the ferrous insertion into protoporphyrin IX. The polypeptide is Ferrochelatase (Campylobacter concisus (strain 13826)).